Consider the following 323-residue polypeptide: Beta-ketoacyl-[acyl-carrier-protein] synthase III (323 aa).

Residues cysteine 112 and histidine 249 contribute to the active site. The tract at residues 250–254 is ACP-binding; it reads QANYR. Residue asparagine 279 is part of the active site.

Belongs to the thiolase-like superfamily. FabH family. Homodimer.

The protein localises to the cytoplasm. It carries out the reaction malonyl-[ACP] + acetyl-CoA + H(+) = 3-oxobutanoyl-[ACP] + CO2 + CoA. It participates in lipid metabolism; fatty acid biosynthesis. Its function is as follows. Catalyzes the condensation reaction of fatty acid synthesis by the addition to an acyl acceptor of two carbons from malonyl-ACP. Catalyzes the first condensation reaction which initiates fatty acid synthesis and may therefore play a role in governing the total rate of fatty acid production. Possesses both acetoacetyl-ACP synthase and acetyl transacylase activities. Its substrate specificity determines the biosynthesis of branched-chain and/or straight-chain of fatty acids. The protein is Beta-ketoacyl-[acyl-carrier-protein] synthase III of Clostridium kluyveri (strain NBRC 12016).